Here is a 771-residue protein sequence, read N- to C-terminus: Semaphorin-3A (771 aa).

The signal sequence occupies residues 1–20 (MGWLTRIVCLFWGVLLTARA). One can recognise a Sema domain in the interval 31–514 (RLKLSYKEML…STAGVAQLPL (484 aa)). The N-linked (GlcNAc...) asparagine glycan is linked to Asn53. Cys103 and Cys114 form a disulfide bridge. Residue Asn125 is glycosylated (N-linked (GlcNAc...) asparagine). Disulfide bonds link Cys132/Cys141, Cys269/Cys381, Cys293/Cys341, and Cys517/Cys535. The Ig-like C2-type domain occupies 580–664 (PEERIIYGVE…GFIQTLLKVT (85 aa)). Residue Asn590 is glycosylated (N-linked (GlcNAc...) asparagine). Cys649 and Cys722 are oxidised to a cystine. Basic residues predominate over residues 728–737 (RDRKQRRQRP). Residues 728–771 (RDRKQRRQRPGHTPGNSNKWKHLQENKKGRNRRTHEFERAPRSV) are disordered. Residues 749 to 771 (HLQENKKGRNRRTHEFERAPRSV) are compositionally biased toward basic and acidic residues.

This sequence belongs to the semaphorin family. Interacts with PLXND1. Expressed in the dorsal root ganglia.

The protein localises to the secreted. Involved in the development of the olfactory system and in neuronal control of puberty. Induces the collapse and paralysis of neuronal growth cones. Could serve as a ligand that guides specific growth cones by a motility-inhibiting mechanism. Binds to the complex neuropilin-1/plexin-1. In Homo sapiens (Human), this protein is Semaphorin-3A (SEMA3A).